A 204-amino-acid polypeptide reads, in one-letter code: Outer-membrane lipoprotein LolB (204 aa).

The signal sequence occupies residues 1–20 (MLRSRRLALLCLATPLWLAA). Residue cysteine 21 is the site of N-palmitoyl cysteine attachment. Cysteine 21 carries the S-diacylglycerol cysteine lipid modification. Positions 131-150 (GRAAPGTPSNVTRDANGRPD) are disordered.

This sequence belongs to the LolB family. In terms of assembly, monomer.

It localises to the cell outer membrane. Plays a critical role in the incorporation of lipoproteins in the outer membrane after they are released by the LolA protein. This Cupriavidus metallidurans (strain ATCC 43123 / DSM 2839 / NBRC 102507 / CH34) (Ralstonia metallidurans) protein is Outer-membrane lipoprotein LolB.